The sequence spans 737 residues: Cellulose synthase-like protein E1 (737 aa).

2 helical membrane-spanning segments follow: residues 26–45 and 58–78; these read AVYRVQAATVAAGILLVLYY and AAWLGMAAAELWFAVYWVIAQ. Residues aspartate 146 and aspartate 451 contribute to the active site. A run of 5 helical transmembrane segments spans residues 528-548, 551-571, 654-674, 683-703, and 716-736; these read LWAANSLPTLYYVVIPSLGLV, TPLFPQIMSPWATPFIYVFCV, VIIATVALLNFVCLVGGLSQI, WNVFLPQAILCGMIVIINMPI, and IPTAVTLASIGFVMLAFLVPI.

Belongs to the glycosyltransferase 2 family. Plant cellulose synthase-like E subfamily.

The protein resides in the golgi apparatus membrane. Thought to be a Golgi-localized beta-glycan synthase that polymerize the backbones of noncellulosic polysaccharides (hemicelluloses) of plant cell wall. This is Cellulose synthase-like protein E1 (CSLE1) from Oryza sativa subsp. japonica (Rice).